Consider the following 153-residue polypeptide: ATP synthase subunit b' (153 aa).

The chain crosses the membrane as a helical span at residues 20-40; sequence TLPLMAVQVVLLTFILNALFF.

It belongs to the ATPase B chain family. As to quaternary structure, F-type ATPases have 2 components, F(1) - the catalytic core - and F(0) - the membrane proton channel. F(1) has five subunits: alpha(3), beta(3), gamma(1), delta(1), epsilon(1). F(0) has four main subunits: a(1), b(1), b'(1) and c(10-14). The alpha and beta chains form an alternating ring which encloses part of the gamma chain. F(1) is attached to F(0) by a central stalk formed by the gamma and epsilon chains, while a peripheral stalk is formed by the delta, b and b' chains.

It is found in the cellular thylakoid membrane. Its function is as follows. F(1)F(0) ATP synthase produces ATP from ADP in the presence of a proton or sodium gradient. F-type ATPases consist of two structural domains, F(1) containing the extramembraneous catalytic core and F(0) containing the membrane proton channel, linked together by a central stalk and a peripheral stalk. During catalysis, ATP synthesis in the catalytic domain of F(1) is coupled via a rotary mechanism of the central stalk subunits to proton translocation. Functionally, component of the F(0) channel, it forms part of the peripheral stalk, linking F(1) to F(0). The b'-subunit is a diverged and duplicated form of b found in plants and photosynthetic bacteria. The polypeptide is ATP synthase subunit b' (Prochlorococcus marinus (strain MIT 9211)).